The primary structure comprises 374 residues: Glutamate 5-kinase (374 aa).

Lys-16 contacts ATP. 3 residues coordinate substrate: Ser-56, Asp-143, and Asn-155. 175–176 (TD) lines the ATP pocket. The PUA domain maps to 282–360 (RGRVVLDAGA…SEIEAVLGYV (79 aa)).

The protein belongs to the glutamate 5-kinase family.

The protein localises to the cytoplasm. The enzyme catalyses L-glutamate + ATP = L-glutamyl 5-phosphate + ADP. It participates in amino-acid biosynthesis; L-proline biosynthesis; L-glutamate 5-semialdehyde from L-glutamate: step 1/2. In terms of biological role, catalyzes the transfer of a phosphate group to glutamate to form L-glutamate 5-phosphate. In Ralstonia pickettii (strain 12J), this protein is Glutamate 5-kinase.